A 173-amino-acid polypeptide reads, in one-letter code: ATP synthase subunit b (173 aa).

Residues Leu-12 to Val-32 form a helical membrane-spanning segment.

Belongs to the ATPase B chain family. F-type ATPases have 2 components, F(1) - the catalytic core - and F(0) - the membrane proton channel. F(1) has five subunits: alpha(3), beta(3), gamma(1), delta(1), epsilon(1). F(0) has three main subunits: a(1), b(2) and c(10-14). The alpha and beta chains form an alternating ring which encloses part of the gamma chain. F(1) is attached to F(0) by a central stalk formed by the gamma and epsilon chains, while a peripheral stalk is formed by the delta and b chains.

The protein localises to the cell inner membrane. F(1)F(0) ATP synthase produces ATP from ADP in the presence of a proton or sodium gradient. F-type ATPases consist of two structural domains, F(1) containing the extramembraneous catalytic core and F(0) containing the membrane proton channel, linked together by a central stalk and a peripheral stalk. During catalysis, ATP synthesis in the catalytic domain of F(1) is coupled via a rotary mechanism of the central stalk subunits to proton translocation. Functionally, component of the F(0) channel, it forms part of the peripheral stalk, linking F(1) to F(0). This is ATP synthase subunit b from Leptospira interrogans serogroup Icterohaemorrhagiae serovar copenhageni (strain Fiocruz L1-130).